A 465-amino-acid chain; its full sequence is Cysteine--tRNA ligase (465 aa).

Zn(2+) is bound at residue C27. The 'HIGH' region signature appears at 29–39 (PTVYDDAHLGH). 3 residues coordinate Zn(2+): C207, H237, and E241. The 'KMSKS' region signature appears at 269-273 (KMSKS). ATP is bound at residue K272.

The protein belongs to the class-I aminoacyl-tRNA synthetase family. In terms of assembly, monomer. Zn(2+) is required as a cofactor.

The protein localises to the cytoplasm. The enzyme catalyses tRNA(Cys) + L-cysteine + ATP = L-cysteinyl-tRNA(Cys) + AMP + diphosphate. This chain is Cysteine--tRNA ligase, found in Nitratiruptor sp. (strain SB155-2).